Here is a 108-residue protein sequence, read N- to C-terminus: Protein phosphatase 1 regulatory subunit 1C (108 aa).

The tract at residues 25 to 108 is disordered; the sequence is AEQIRKRRPT…ASEREEKWNH (84 aa). The segment covering 45-54 has biased composition (basic and acidic residues); that stretch reads NSPEIDEKRV. Positions 55 to 73 are enriched in polar residues; that stretch reads TNTQESQNASPKQRKQSVY. Basic and acidic residues predominate over residues 99-108; the sequence is ASEREEKWNH.

It belongs to the protein phosphatase inhibitor 1 family.

It localises to the cytoplasm. Its function is as follows. May increase cell susceptibility to TNF-induced apoptosis. The protein is Protein phosphatase 1 regulatory subunit 1C (Ppp1r1c) of Mus musculus (Mouse).